Consider the following 122-residue polypeptide: Large ribosomal subunit protein uL14 (122 aa).

This sequence belongs to the universal ribosomal protein uL14 family. As to quaternary structure, part of the 50S ribosomal subunit. Forms a cluster with proteins L3 and L19. In the 70S ribosome, L14 and L19 interact and together make contacts with the 16S rRNA in bridges B5 and B8.

Binds to 23S rRNA. Forms part of two intersubunit bridges in the 70S ribosome. The protein is Large ribosomal subunit protein uL14 of Thermotoga petrophila (strain ATCC BAA-488 / DSM 13995 / JCM 10881 / RKU-1).